A 903-amino-acid polypeptide reads, in one-letter code: Zinc finger CCCH domain-containing protein 27 (903 aa).

Residues Met-1–His-144 are disordered. Over residues Asp-11 to Asn-24 the composition is skewed to basic and acidic residues. Residues Thr-33–Asp-46 are compositionally biased toward acidic residues. Residues Ser-86–Pro-96 are compositionally biased toward basic and acidic residues. The segment at Gly-225–Asn-253 adopts a C3H1-type zinc-finger fold. The disordered stretch occupies residues Ala-390–Lys-456. Positions Gly-397–Asn-410 are enriched in low complexity. The segment covering Lys-432–Arg-441 has biased composition (polar residues). An RRM domain is found at Arg-459–Arg-531. Disordered stretches follow at residues Lys-545 to Arg-609, Lys-642 to Pro-720, and Thr-826 to Gln-903. Over residues Ser-556 to Arg-576 the composition is skewed to polar residues. Low complexity predominate over residues Ala-577–Gly-587. Residues Lys-608–Ser-649 adopt a coiled-coil conformation. The span at Ser-693 to Ala-708 shows a compositional bias: low complexity. Residues Thr-826–Thr-886 show a composition bias toward polar residues.

The chain is Zinc finger CCCH domain-containing protein 27 from Oryza sativa subsp. japonica (Rice).